A 287-amino-acid chain; its full sequence is Putative inactive carboxylesterase 4 (287 aa).

A signal peptide spans 1-18; the sequence is MWLPALVLATLAASAAWA. An N-linked (GlcNAc...) asparagine glycan is attached at asparagine 80.

It belongs to the type-B carboxylesterase/lipase family. Expressed in placenta.

It is found in the secreted. Functionally, has no esterase activity. This is Putative inactive carboxylesterase 4 (CES1P1) from Homo sapiens (Human).